Here is a 425-residue protein sequence, read N- to C-terminus: MLDIKFVRAHPEVVLADLEKRQDAEKLLWVDTVLEQDKLFRELTVKNNELRARRNQIAKEINAYKKEGKDPAPLFAEAKALPGLIKDNDDIMEKATEQVRYYLMRLPNILHESVPYGKDDTENVVVKKVGTPRSLDFELKNHGELAAANGWADFERATKTSGAGFYFLKGNLALLDMALQRFALDTIIAKGYTPIIPPYMMNRKSYEEVTDLGDFEKVMYKIEDDDAYLIATAEHPMAAMYQDEIFEEKDLPLKMVGISPCFRREIGAHGLDSRGLFRVHQFTKIEQFIYCMPEKSWEMHEELLANAEEIFTKLGLPYRVVNICTGDIGTVAAKKYDMEAWMPRDNEYREVVSCSNCTAYQSVRLNIRVRDAHDFESKQWLHTLNSTAVATSRALRCILENYQTEDGKVEIPKVLRPYMNGLEYL.

232–234 (TAE) is an L-serine binding site. ATP-binding positions include 263–265 (RRE) and V279. E286 contacts L-serine. Position 350-353 (350-353 (EVVS)) interacts with ATP. T387 is an L-serine binding site.

This sequence belongs to the class-II aminoacyl-tRNA synthetase family. Type-1 seryl-tRNA synthetase subfamily. In terms of assembly, homodimer. The tRNA molecule binds across the dimer.

It localises to the cytoplasm. The catalysed reaction is tRNA(Ser) + L-serine + ATP = L-seryl-tRNA(Ser) + AMP + diphosphate + H(+). The enzyme catalyses tRNA(Sec) + L-serine + ATP = L-seryl-tRNA(Sec) + AMP + diphosphate + H(+). It functions in the pathway aminoacyl-tRNA biosynthesis; selenocysteinyl-tRNA(Sec) biosynthesis; L-seryl-tRNA(Sec) from L-serine and tRNA(Sec): step 1/1. Functionally, catalyzes the attachment of serine to tRNA(Ser). Is also able to aminoacylate tRNA(Sec) with serine, to form the misacylated tRNA L-seryl-tRNA(Sec), which will be further converted into selenocysteinyl-tRNA(Sec). This Methanocorpusculum labreanum (strain ATCC 43576 / DSM 4855 / Z) protein is Serine--tRNA ligase.